The chain runs to 332 residues: Ketol-acid reductoisomerase (NADP(+)) 2 (332 aa).

The KARI N-terminal Rossmann domain maps to 2–182; sequence AELFYDADAD…GGTRAGVIRT (181 aa). NADP(+)-binding positions include 25-28, serine 51, serine 53, and 83-86; these read YGSQ and DPIQ. Histidine 108 is an active-site residue. Position 134 (glycine 134) interacts with NADP(+). A KARI C-terminal knotted domain is found at 183-328; sequence TFTEETETDL…KELRKLMSWV (146 aa). Aspartate 191, glutamate 195, glutamate 227, and glutamate 231 together coordinate Mg(2+). Serine 252 provides a ligand contact to substrate.

It belongs to the ketol-acid reductoisomerase family. It depends on Mg(2+) as a cofactor.

The catalysed reaction is (2R)-2,3-dihydroxy-3-methylbutanoate + NADP(+) = (2S)-2-acetolactate + NADPH + H(+). The enzyme catalyses (2R,3R)-2,3-dihydroxy-3-methylpentanoate + NADP(+) = (S)-2-ethyl-2-hydroxy-3-oxobutanoate + NADPH + H(+). It functions in the pathway amino-acid biosynthesis; L-isoleucine biosynthesis; L-isoleucine from 2-oxobutanoate: step 2/4. It participates in amino-acid biosynthesis; L-valine biosynthesis; L-valine from pyruvate: step 2/4. Involved in the biosynthesis of branched-chain amino acids (BCAA). Catalyzes an alkyl-migration followed by a ketol-acid reduction of (S)-2-acetolactate (S2AL) to yield (R)-2,3-dihydroxy-isovalerate. In the isomerase reaction, S2AL is rearranged via a Mg-dependent methyl migration to produce 3-hydroxy-3-methyl-2-ketobutyrate (HMKB). In the reductase reaction, this 2-ketoacid undergoes a metal-dependent reduction by NADPH to yield (R)-2,3-dihydroxy-isovalerate. In Streptomyces coelicolor (strain ATCC BAA-471 / A3(2) / M145), this protein is Ketol-acid reductoisomerase (NADP(+)) 2.